A 561-amino-acid chain; its full sequence is Sensor histidine kinase BtsS (561 aa).

Topologically, residues 1–3 (MYD) are cytoplasmic. Residues 4–24 (FNLVLLLLQQMCVFLVIAWLM) traverse the membrane as a helical segment. Residues 25–43 (SKTPLFIPLMQVTVRLPHK) lie on the Periplasmic side of the membrane. The helical transmembrane segment at 44–64 (FLCYIVFSIFCIMGTWFGLHI) threads the bilayer. At 65 to 72 (DDSIANTR) the chain is on the cytoplasmic side. Residues 73-93 (AIGAVMGGLLGGPVVGGLVGL) traverse the membrane as a helical segment. Topologically, residues 94-108 (TGGLHRYSMGGMTAL) are periplasmic. Residues 109 to 129 (SCMISTIVEGLLGGLVHSILI) form a helical membrane-spanning segment. At 130 to 140 (RRGRTDKVFNP) the chain is on the cytoplasmic side. The chain crosses the membrane as a helical span at residues 141–161 (ITAGAVTFVAEMVQMLIILAI). Residues 162–170 (ARPYEDAVR) lie on the Periplasmic side of the membrane. Residues 171–191 (LVSNIAAPMMVTNTVGAALFM) form a helical membrane-spanning segment. Topologically, residues 192–561 (RILLDKRAMF…TLRLPWRDEA (370 aa)) are cytoplasmic. In terms of domain architecture, Histidine kinase spans 354–559 (QILAGQYERQ…RITLRLPWRD (206 aa)).

In terms of processing, autophosphorylated.

It is found in the cell inner membrane. The enzyme catalyses ATP + protein L-histidine = ADP + protein N-phospho-L-histidine.. Member of the two-component regulatory system BtsS/BtsR. BtsS is a high-affinity receptor for extracellular pyruvate that activates BtsR by phosphorylation. This chain is Sensor histidine kinase BtsS, found in Escherichia coli O6:H1 (strain CFT073 / ATCC 700928 / UPEC).